The chain runs to 680 residues: WD repeat-containing protein 48 homolog (680 aa).

8 WD repeats span residues Gln-26–Tyr-65, His-71–Thr-110, Thr-113–Ala-152, Gly-164–Lys-203, Gly-206–Thr-245, Val-248–Leu-287, Glu-290–Leu-329, and Lys-350–Thr-389. The disordered stretch occupies residues Thr-594–Leu-618. The span at Ser-596 to Ser-609 shows a compositional bias: low complexity.

It belongs to the WD repeat WDR48 family. In terms of assembly, catalytic component of the Usp12-46 deubiquitylase complex consisting of Usp12-46, Wdr20 and Uaf1; regulatory subunit that, together wtih Wdr20, stabilizes Usp12-46. The Usp12-46 deubiquitylase complex associates with arr/arrow; the interaction leads to deubiquitination and stabilization of arr/arrow.

Its function is as follows. Regulatory component of the Usp12-46 deubiquitylase complex. activates deubiquitination by increasing the catalytic turnover without increasing the affinity of deubiquitinating enzymes for the substrate. The complex deubiquitylates the wg/wingless-signaling receptor arr/arrow, which stabilizes the receptor and increases its concentration at the cell surface; this enhances the sensitivity of cells to wg/wingless-signal stimulation. This increases the amplitude and spatial range of the signaling response to the wg/wingless morphogen gradient, facilitating the precise concentration-dependent regulation of its target genes. Together with Wdr20 and Usp12-46 required for wg/wingless-mediated signaling in the wing imaginal disc and for wg/wingless-dependent regulation of intestinal stem cell proliferation. The protein is WD repeat-containing protein 48 homolog of Drosophila persimilis (Fruit fly).